Consider the following 352-residue polypeptide: tRNA pseudouridine synthase D (352 aa).

Aspartate 81 (nucleophile) is an active-site residue. The 147-residue stretch at 157 to 303 (GVPNYFGTQR…MDHERRILRL (147 aa)) folds into the TRUD domain.

The protein belongs to the pseudouridine synthase TruD family.

The catalysed reaction is uridine(13) in tRNA = pseudouridine(13) in tRNA. Functionally, responsible for synthesis of pseudouridine from uracil-13 in transfer RNAs. In Pseudomonas putida (strain ATCC 700007 / DSM 6899 / JCM 31910 / BCRC 17059 / LMG 24140 / F1), this protein is tRNA pseudouridine synthase D.